The sequence spans 87 residues: Toxin Css39.8 (87 aa).

Positions 1-19 (MNSLLMITACFFLIGTVWA) are cleaved as a signal peptide. An LCN-type CS-alpha/beta domain is found at 20–85 (KEGYLVNKST…TYPLPNKSCS (66 aa)). Cystine bridges form between Cys31–Cys84, Cys35–Cys60, Cys44–Cys65, and Cys48–Cys67.

The protein belongs to the long (4 C-C) scorpion toxin superfamily. Sodium channel inhibitor family. Beta subfamily. In terms of tissue distribution, expressed by the venom gland.

Its subcellular location is the secreted. Beta toxins bind voltage-independently at site-4 of sodium channels (Nav) and shift the voltage of activation toward more negative potentials thereby affecting sodium channel activation and promoting spontaneous and repetitive firing. This toxin is lethal to crustaceans (freshwater crayfish (Cambarellus montezumae spp.)), it provokes a reversible paralysis to insects (crickets (Achaeta spp.)), but is not toxic to mice. At high concentrations, it does displace the (beta) mammal-specific toxin Cn2 from rat brain synaptosomes. The polypeptide is Toxin Css39.8 (Centruroides suffusus (Durango bark scorpion)).